We begin with the raw amino-acid sequence, 180 residues long: Putative phycocyanobilin lyase CpcS 2 (180 aa).

This sequence belongs to the CpcS/CpeS biliprotein lyase family.

In terms of biological role, covalently attaches a chromophore to Cys residue(s) of phycobiliproteins (Potential). In vitro does not act as a chromophore lyase for ApcA1, ApcA2, ApcB, ApcD, ApcF, CpcB or PecB, the lyase activity is therefore unsure. This is Putative phycocyanobilin lyase CpcS 2 (cpeS2) from Nostoc sp. (strain PCC 7120 / SAG 25.82 / UTEX 2576).